We begin with the raw amino-acid sequence, 217 residues long: PRA1 family protein B3 (217 aa).

The segment at 1–24 (MMANPPTLPISDHSGGGSQSQQPV) is disordered. The next 5 membrane-spanning stretches (helical) occupy residues 76-96 (LPYF…LSLL), 98-118 (HPFS…LYLF), 138-158 (LGVL…GSLL), 162-182 (LMIG…EDLF), and 193-213 (LLSF…STPA).

The protein belongs to the PRA1 family. As to quaternary structure, interacts with PRA1B1, PRA1B2, PRA1B4, PRA1B5, PRA1B6 and PRA1E. As to expression, expressed in hypocotyls and shoot apex.

The protein resides in the endosome membrane. Its function is as follows. May be involved in both secretory and endocytic intracellular trafficking in the endosomal/prevacuolar compartments. The polypeptide is PRA1 family protein B3 (PRA1B3) (Arabidopsis thaliana (Mouse-ear cress)).